A 395-amino-acid chain; its full sequence is RNA pseudouridine synthase 7 (395 aa).

Positions 1–21 (MKRKQQEDDNDDGVEKAVSPV) are disordered. One can recognise an S4 RNA-binding domain in the interval 74–136 (KTIVDLFADE…HEPPVMIDDV (63 aa)). D187 is a catalytic residue. A compositionally biased stretch (polar residues) spans 244-255 (EGRSTAEDANSS). The tract at residues 244–263 (EGRSTAEDANSSGDDKKVKG) is disordered.

This sequence belongs to the pseudouridine synthase RluA family.

The enzyme catalyses a uridine in RNA = a pseudouridine in RNA. This chain is RNA pseudouridine synthase 7, found in Arabidopsis thaliana (Mouse-ear cress).